Here is a 495-residue protein sequence, read N- to C-terminus: BUB3-interacting and GLEBS motif-containing protein ZNF207 (495 aa).

The microtubule-binding region stretch occupies residues 1 to 92 (MGRKKKKQLK…EGIPEKDMDE (92 aa)). 2 consecutive C2H2-type zinc fingers follow at residues 11 to 34 (PWCW…KAKH) and 35 to 58 (FKCH…MQVH). The segment covering 99–111 (QKTQESQKKKQQD) has biased composition (basic and acidic residues). Disordered regions lie at residues 99–161 (QKTQ…PGIP), 252–292 (PPAP…SNSE), and 316–372 (VGTD…ATLT). The segment covering 112 to 121 (DSDEYDDDES) has biased composition (acidic residues). Over residues 127-136 (FQPQPVQPQQ) the composition is skewed to polar residues. Over residues 142-161 (MAQPGLPPVPGAPGMPPGIP) the composition is skewed to pro residues. 2 stretches are compositionally biased toward low complexity: residues 283–292 (SSSTASSNSE) and 326–372 (TPAA…ATLT). Residues 376–408 (ATSKLIHPDEDISLEERRAQLPKYQRNLPRPGQ) form a GLEBS region. The tract at residues 462-495 (PYGQGPPMVPPYQGGPPRPPMGMRPPVMSQGGRY) is disordered. The segment covering 464 to 484 (GQGPPMVPPYQGGPPRPPMGM) has biased composition (pro residues).

Interacts (via GLEBS region) with BUB3. In terms of tissue distribution, in day-13 embryo, strongly expressed in the nervous system (brain, spinal cord and dorsal root ganglia), with strong to weak expression in other regions. Continues to be strongly expressed in the neonatal brain while expression is weak in the brain and spinal cord of adult.

The protein resides in the nucleus. It is found in the chromosome. Its subcellular location is the centromere. It localises to the kinetochore. The protein localises to the cytoplasm. The protein resides in the cytoskeleton. It is found in the spindle. Kinetochore- and microtubule-binding protein that plays a key role in spindle assembly. ZNF207/BuGZ is mainly composed of disordered low-complexity regions and undergoes phase transition or coacervation to form temperature-dependent liquid droplets. Coacervation promotes microtubule bundling and concentrates tubulin, promoting microtubule polymerization and assembly of spindle and spindle matrix by concentrating its building blocks. Also acts as a regulator of mitotic chromosome alignment by mediating the stability and kinetochore loading of BUB3. Mechanisms by which BUB3 is protected are unclear: according to a first report, ZNF207/BuGZ may act by blocking ubiquitination and proteasomal degradation of BUB3. According to another report, the stabilization is independent of the proteasome. This Mus musculus (Mouse) protein is BUB3-interacting and GLEBS motif-containing protein ZNF207.